The primary structure comprises 99 residues: Phosphoribosyl-ATP pyrophosphatase (99 aa).

The protein belongs to the PRA-PH family.

It is found in the cytoplasm. It carries out the reaction 1-(5-phospho-beta-D-ribosyl)-ATP + H2O = 1-(5-phospho-beta-D-ribosyl)-5'-AMP + diphosphate + H(+). It participates in amino-acid biosynthesis; L-histidine biosynthesis; L-histidine from 5-phospho-alpha-D-ribose 1-diphosphate: step 2/9. This is Phosphoribosyl-ATP pyrophosphatase from Methanococcoides burtonii (strain DSM 6242 / NBRC 107633 / OCM 468 / ACE-M).